A 348-amino-acid polypeptide reads, in one-letter code: Dihydroorotase (348 aa).

Residues His14 and His16 each contribute to the Zn(2+) site. Substrate is bound by residues 16–18 and Asn42; that span reads HLR. Zn(2+) contacts are provided by Lys100, His137, and His175. An N6-carboxylysine modification is found at Lys100. Substrate is bound at residue His137. Leu220 is a binding site for substrate. Asp248 contributes to the Zn(2+) binding site. The active site involves Asp248. Positions 252 and 264 each coordinate substrate.

The protein belongs to the metallo-dependent hydrolases superfamily. DHOase family. Class II DHOase subfamily. As to quaternary structure, homodimer. Requires Zn(2+) as cofactor.

It carries out the reaction (S)-dihydroorotate + H2O = N-carbamoyl-L-aspartate + H(+). It participates in pyrimidine metabolism; UMP biosynthesis via de novo pathway; (S)-dihydroorotate from bicarbonate: step 3/3. Catalyzes the reversible cyclization of carbamoyl aspartate to dihydroorotate. The sequence is that of Dihydroorotase from Azotobacter vinelandii (strain DJ / ATCC BAA-1303).